A 224-amino-acid polypeptide reads, in one-letter code: Large ribosomal subunit protein uL1m (224 aa).

It belongs to the universal ribosomal protein uL1 family.

The protein localises to the mitochondrion. The protein is Large ribosomal subunit protein uL1m (RPL1) of Reclinomonas americana.